A 1015-amino-acid chain; its full sequence is SPOC domain-containing protein 1 (1015 aa).

4 disordered regions span residues 73–97 (MVSP…SPVL), 118–159 (GFSL…EPGG), 213–320 (LYPE…PRLE), and 344–406 (AASS…MTPL). A compositionally biased stretch (basic and acidic residues) spans 304 to 320 (SQDHAEGASKKDFPRLE). Polar residues predominate over residues 373–382 (AHPTPCQSDP). Residues 388-397 (AEPHQQRAED) show a composition bias toward basic and acidic residues. The TFIIS central domain maps to 410-530 (VRSTVVRAMQ…IIEQQQKELY (121 aa)). The interval 643 to 685 (IQKAPGPAPASSPEVLKVGETPPKEPQDRLQMPAGLKNAPPSP) is disordered. Residues 688–791 (WEGSLDMFSI…VQQVKMVLLP (104 aa)) form the SPOC domain. Disordered regions lie at residues 858-906 (PEDR…PGWG) and 967-1015 (QSQD…EHEC). Polar residues predominate over residues 967-978 (QSQDSLPPSTVV).

In terms of assembly, interacts with DNMT3A, DNMT3C and DNMT3L. Interacts with C19orf84 homolog. Interacts with SPIN1; promoting recruitment to transposons marked with histone H3 trimethylated at both 'Lys-4' and 'Lys-9' (H3K4me3K9me3).

It localises to the nucleus. It is found in the chromosome. Protein adapter that acts as an essential executor of PIWIL4-piRNA pathway directed transposon DNA methylation and silencing in the male embryonic germ cells. Recruited to young transposons, which are specifically marked with histone H3 trimethylated at both 'Lys-4' and 'Lys-9' (H3K4me3K9me3), via its association with SPIN1 chromatin reader, and associates with the de novo DNA methylation machinery and repressive chromatin remodeling complexes. Following this, PIWIL4 engages with nascent transposable element transcript to direct piRNA-directed DNA methylation. Not required for piRNA biosynthesis. This is SPOC domain-containing protein 1 from Mus musculus (Mouse).